Here is a 415-residue protein sequence, read N- to C-terminus: Methylthioribose-1-phosphate isomerase (415 aa).

Aspartate 284 (proton donor) is an active-site residue.

The protein belongs to the eIF-2B alpha/beta/delta subunits family. MtnA subfamily.

Its subcellular location is the cytoplasm. The protein resides in the nucleus. It catalyses the reaction 5-(methylsulfanyl)-alpha-D-ribose 1-phosphate = 5-(methylsulfanyl)-D-ribulose 1-phosphate. It functions in the pathway amino-acid biosynthesis; L-methionine biosynthesis via salvage pathway; L-methionine from S-methyl-5-thio-alpha-D-ribose 1-phosphate: step 1/6. Functionally, catalyzes the interconversion of methylthioribose-1-phosphate (MTR-1-P) into methylthioribulose-1-phosphate (MTRu-1-P). The protein is Methylthioribose-1-phosphate isomerase of Vanderwaltozyma polyspora (strain ATCC 22028 / DSM 70294 / BCRC 21397 / CBS 2163 / NBRC 10782 / NRRL Y-8283 / UCD 57-17) (Kluyveromyces polysporus).